The chain runs to 272 residues: Hematopoietically-expressed homeobox protein hhex (272 aa).

Residues 137 to 196 (RKGGQVRFSNDQTIELEKKFETQKYLSPPERKRLAKMLQLSERQVKTWFQNRRAKWRRLK) constitute a DNA-binding region (homeobox). The tract at residues 222-272 (CLSAEQKSRESSLDDPTSSPTSQGNLDSEVSDDSDQEVDIEGDKGYYNCAH) is disordered. Residues 250-261 (EVSDDSDQEVDI) show a composition bias toward acidic residues.

First expressed in the dorsal endomesoderm of the gastrula stage embryo. The dorsal endomesoderm contributes to forming the embryonic liver, and expression continues in the liver throughout development. Also expressed in precursors of the developing thyroid gland, and beginning at the tailbud stage, expressed in the ventral region of the head. Also transiently expressed in the endothelial layer of developing vascular tissues of the embryo, beginning at the tailbud stages.

The protein localises to the nucleus. Its function is as follows. Recognizes the DNA sequence 5'-ATTAA-3'. Transcriptional repressor. Regulates the differentiation of both endothelial and blood cells. Probably plays a role in the proliferation of vascular endothelial cells during blood vessel development. Establishes anterior identity at two levels; acts early to enhance canonical wnt-signaling by repressing expression of tle4, and acts later to inhibit nodal-signaling by directly targeting nodal/nr1 and nodal2/nr2. May play a role in liver development. Induces heart development. This Xenopus laevis (African clawed frog) protein is Hematopoietically-expressed homeobox protein hhex.